Consider the following 171-residue polypeptide: 3-hydroxydecanoyl-[acyl-carrier-protein] dehydratase (171 aa).

Residue His-70 is part of the active site.

It belongs to the thioester dehydratase family. FabA subfamily. Homodimer.

Its subcellular location is the cytoplasm. The catalysed reaction is a (3R)-hydroxyacyl-[ACP] = a (2E)-enoyl-[ACP] + H2O. The enzyme catalyses (3R)-hydroxydecanoyl-[ACP] = (2E)-decenoyl-[ACP] + H2O. It catalyses the reaction (2E)-decenoyl-[ACP] = (3Z)-decenoyl-[ACP]. The protein operates within lipid metabolism; fatty acid biosynthesis. Functionally, necessary for the introduction of cis unsaturation into fatty acids. Catalyzes the dehydration of (3R)-3-hydroxydecanoyl-ACP to E-(2)-decenoyl-ACP and then its isomerization to Z-(3)-decenoyl-ACP. Can catalyze the dehydratase reaction for beta-hydroxyacyl-ACPs with saturated chain lengths up to 16:0, being most active on intermediate chain length. The polypeptide is 3-hydroxydecanoyl-[acyl-carrier-protein] dehydratase (Mesorhizobium japonicum (strain LMG 29417 / CECT 9101 / MAFF 303099) (Mesorhizobium loti (strain MAFF 303099))).